Reading from the N-terminus, the 343-residue chain is Heat-inducible transcription repressor HrcA (343 aa).

Belongs to the HrcA family.

Its function is as follows. Negative regulator of class I heat shock genes (grpE-dnaK-dnaJ and groELS operons). Prevents heat-shock induction of these operons. This Bacillus velezensis (strain DSM 23117 / BGSC 10A6 / LMG 26770 / FZB42) (Bacillus amyloliquefaciens subsp. plantarum) protein is Heat-inducible transcription repressor HrcA.